Reading from the N-terminus, the 180-residue chain is Crossover junction endodeoxyribonuclease RuvC (180 aa).

Residues aspartate 7, glutamate 66, and aspartate 138 contribute to the active site. Mg(2+) is bound by residues aspartate 7, glutamate 66, and aspartate 138.

It belongs to the RuvC family. In terms of assembly, homodimer which binds Holliday junction (HJ) DNA. The HJ becomes 2-fold symmetrical on binding to RuvC with unstacked arms; it has a different conformation from HJ DNA in complex with RuvA. In the full resolvosome a probable DNA-RuvA(4)-RuvB(12)-RuvC(2) complex forms which resolves the HJ. Mg(2+) is required as a cofactor.

It is found in the cytoplasm. It carries out the reaction Endonucleolytic cleavage at a junction such as a reciprocal single-stranded crossover between two homologous DNA duplexes (Holliday junction).. In terms of biological role, the RuvA-RuvB-RuvC complex processes Holliday junction (HJ) DNA during genetic recombination and DNA repair. Endonuclease that resolves HJ intermediates. Cleaves cruciform DNA by making single-stranded nicks across the HJ at symmetrical positions within the homologous arms, yielding a 5'-phosphate and a 3'-hydroxyl group; requires a central core of homology in the junction. The consensus cleavage sequence is 5'-(A/T)TT(C/G)-3'. Cleavage occurs on the 3'-side of the TT dinucleotide at the point of strand exchange. HJ branch migration catalyzed by RuvA-RuvB allows RuvC to scan DNA until it finds its consensus sequence, where it cleaves and resolves the cruciform DNA. The chain is Crossover junction endodeoxyribonuclease RuvC from Paraburkholderia phymatum (strain DSM 17167 / CIP 108236 / LMG 21445 / STM815) (Burkholderia phymatum).